The following is a 439-amino-acid chain: Gap junction gamma-2 protein (439 aa).

Residues Met-1–Lys-25 are Cytoplasmic-facing. A helical transmembrane segment spans residues Val-26–Ile-46. Over Tyr-47–Arg-78 the chain is Extracellular. Residues Phe-79–Val-99 form a helical membrane-spanning segment. Residues His-100 to Gln-216 lie on the Cytoplasmic side of the membrane. Residues Gln-108–Cys-178 form a disordered region. Over residues Arg-112–Arg-125 the composition is skewed to basic residues. Over residues Asp-140 to Ala-174 the composition is skewed to acidic residues. Residues Leu-217–Phe-237 traverse the membrane as a helical segment. Topologically, residues Glu-238–Thr-265 are extracellular. A helical membrane pass occupies residues Val-266–Met-286. Residues Ala-287–Ile-439 lie on the Cytoplasmic side of the membrane. Residues Ala-364–Ile-439 are disordered. Position 371 is a phosphoserine (Ser-371). The segment covering Pro-378–Arg-393 has biased composition (low complexity).

This sequence belongs to the connexin family. Gamma-type subfamily. As to quaternary structure, a connexon is composed of a hexamer of connexins. Interacts with TJP1. As to expression, expressed in central nervous system, in sciatic nerve and sural nerve. Also detected in skeletal muscles.

The protein localises to the cell membrane. Its subcellular location is the cell junction. The protein resides in the gap junction. Its function is as follows. One gap junction consists of a cluster of closely packed pairs of transmembrane channels, the connexons, through which materials of low MW diffuse from one cell to a neighboring cell. May play a role in myelination in central and peripheral nervous systems. The sequence is that of Gap junction gamma-2 protein (GJC2) from Homo sapiens (Human).